Here is a 21-residue protein sequence, read N- to C-terminus: 40 kDa major outer membrane protein (21 aa).

As to quaternary structure, disulfide bond interactions within and between MOMP molecules and other components form high molecular-weight oligomers.

It is found in the cell outer membrane. Its function is as follows. Structural rigidity of the outer membrane of elementary bodies and porin forming, permitting diffusion of solutes through the intracellular reticulate body membrane. This chain is 40 kDa major outer membrane protein, found in Actinobacillus pleuropneumoniae (Haemophilus pleuropneumoniae).